We begin with the raw amino-acid sequence, 358 residues long: MTNFEYYRDFDDFQRRETINFFLSKFPLASQKQLQDFLEQARQAYVQLRQTNPAHLDWNQTLLYLAQKFLPEKQSEKDRLKKILVLQEQLKVRYEGEIKRQSQQNSELLIQLGQRDEEIIQMQQLFKEKERQLEVYQKQLNEAKEYNHKLEEHYNKTLEEALKEYEQQCTDAIHRRDEEIQAIFTSKLNEKNSEITQLQTYLQSAVDENEALQKQHKLVLFKNQKYEKMVSDLQVDLARIQEINNSLTSEKRDFQRANNDLVKQYNKLKNRLEQKLGEITNAQVNGQTHTVSLADTSQQFHRPQEAVIPQTQVISYTLDDMDDDMEVEETPPTTNKDLPRGATQPKRNSIKRVSKLID.

The disordered stretch occupies residues 324 to 358 (DMEVEETPPTTNKDLPRGATQPKRNSIKRVSKLID). The span at 348 to 358 (NSIKRVSKLID) shows a compositional bias: basic residues.

This is an uncharacterized protein from Mycoplasma pneumoniae (strain ATCC 29342 / M129 / Subtype 1) (Mycoplasmoides pneumoniae).